A 400-amino-acid polypeptide reads, in one-letter code: MMDLRNTPAKSLDKFIEDYLLPDTCFRMQINHAIDIICGFLKERCFRGSSYPVCVSKVVKGGSSGKGTTLRGRSDADLVVFLSPLTTFQDQLNRRGEFIQEIRRQLEACQRERAFSVKFEVQAPRWGNPRALSFVLSSLQLGEGVEFDVLPAFDALGQLTGGYKPNPQIYVKLIEECTDLQKEGEFSTCFTELQRDFLKQRPTKLKSLIRLVKHWYQNCKKKLGKLPPQYALELLTVYAWERGSMKTHFNTAQGFRTVLELVINYQQLCIYWTKYYDFKNPIIEKYLRRQLTKPRPVILDPADPTGNLGGGDPKGWRQLAQEAEAWLNYPCFKNWDGSPVSSWILLAESNSADDETDDPRRYQKYGYIGTHEYPHFSHRPSTLQAASTPQAEEDWTCTIL.

The tract at residues 13-60 (DKFIEDYLLPDTCFRMQINHAIDIICGFLKERCFRGSSYPVCVSKVVK) is interaction with dsRNA. S63 contributes to the ATP binding site. Residues D75, D77, and D148 each coordinate Mg(2+). Positions 200 to 210 (QRPTKLKSLIR) are interaction with dsRNA. Residues R210, K213, and Q229 each contribute to the ATP site. C397 is lipidated: S-geranylgeranyl cysteine.

This sequence belongs to the 2-5A synthase family. As to quaternary structure, monomer. Homotetramer. Mg(2+) serves as cofactor. Post-translationally, prenylated at C-terminal. C-terminal prenylation is necessary to initiate a block to SARS-CoV-2 and is associated with protection from severe COVID-1. The prenylated form is targeted to perinuclear structures rich in viral dsRNA, whereas the non-prenylated form is diffusely localized and unable to initiate a detectable block to SARS-CoV-2 replication. C-terminal prenylation is also necessary to initiate a block to cardiovirus EMCV. Not prenylated at C-terminal. The non-prenylated form is diffusely localized and unable to initiate a detectable block to SARS-CoV-2 replication. As to expression, expressed in lungs.

It is found in the cytoplasm. The protein localises to the mitochondrion. It localises to the nucleus. Its subcellular location is the microsome. The protein resides in the endoplasmic reticulum. It is found in the secreted. It catalyses the reaction 3 ATP = 5'-triphosphoadenylyl-(2'-&gt;5')-adenylyl-(2'-&gt;5')-adenosine + 2 diphosphate. With respect to regulation, produced as a latent enzyme which is activated by dsRNA generated during the course of viral infection. The dsRNA activator must be at least 15 nucleotides long, and no modification of the 2'-hydroxyl group is tolerated. ssRNA or dsDNA do not act as activators. In terms of biological role, interferon-induced, dsRNA-activated antiviral enzyme which plays a critical role in cellular innate antiviral response. In addition, it may also play a role in other cellular processes such as apoptosis, cell growth, differentiation and gene regulation. Synthesizes higher oligomers of 2'-5'-oligoadenylates (2-5A) from ATP which then bind to the inactive monomeric form of ribonuclease L (RNase L) leading to its dimerization and subsequent activation. Activation of RNase L leads to degradation of cellular as well as viral RNA, resulting in the inhibition of protein synthesis, thus terminating viral replication. Can mediate the antiviral effect via the classical RNase L-dependent pathway or an alternative antiviral pathway independent of RNase L. The secreted form displays antiviral effect against vesicular stomatitis virus (VSV), herpes simplex virus type 2 (HSV-2), and encephalomyocarditis virus (EMCV) and stimulates the alternative antiviral pathway independent of RNase L. When prenylated at C-terminal, acts as a double-stranded RNA (dsRNA) sensor specifically targeted to membranous replicative organelles in SARS coronavirus-2/SARS-CoV-2 infected cells where it binds to dsRNA structures in the SARS-CoV-2 5'-UTR and initiates a potent block to SARS-CoV-2 replication. Recognizes short stretches of dsRNA and activates RNase L. The binding is remarkably specific, with two conserved stem loops in the SARS-CoV-2 5'- untranslated region (UTR) constituting the principal viral target. The same mechanism is necessary to initiate a block to cardiovirus EMCV. Its function is as follows. Not prenylated at C-terminal, is diffusely localized and unable to initiate a detectable block to SARS-CoV-2 replication. The polypeptide is 2'-5'-oligoadenylate synthase 1 (OAS1) (Homo sapiens (Human)).